A 207-amino-acid chain; its full sequence is Holliday junction branch migration complex subunit RuvA (207 aa).

Residues 1 to 64 (MIGLISGQVQ…EDAQLLYGFI (64 aa)) form a domain I region. The domain II stretch occupies residues 65–143 (DRKERDVFRQ…NIEVDNSNLE (79 aa)). The tract at residues 144 to 152 (FAIQPAPIS) is flexible linker. A domain III region spans residues 153–207 (AEDSIIAEVEGALMSLGYKEKEAQQAIKAAKSNGETFADTQSLLKATLQQFQSFK).

Belongs to the RuvA family. Homotetramer. Forms an RuvA(8)-RuvB(12)-Holliday junction (HJ) complex. HJ DNA is sandwiched between 2 RuvA tetramers; dsDNA enters through RuvA and exits via RuvB. An RuvB hexamer assembles on each DNA strand where it exits the tetramer. Each RuvB hexamer is contacted by two RuvA subunits (via domain III) on 2 adjacent RuvB subunits; this complex drives branch migration. In the full resolvosome a probable DNA-RuvA(4)-RuvB(12)-RuvC(2) complex forms which resolves the HJ.

Its subcellular location is the cytoplasm. In terms of biological role, the RuvA-RuvB-RuvC complex processes Holliday junction (HJ) DNA during genetic recombination and DNA repair, while the RuvA-RuvB complex plays an important role in the rescue of blocked DNA replication forks via replication fork reversal (RFR). RuvA specifically binds to HJ cruciform DNA, conferring on it an open structure. The RuvB hexamer acts as an ATP-dependent pump, pulling dsDNA into and through the RuvAB complex. HJ branch migration allows RuvC to scan DNA until it finds its consensus sequence, where it cleaves and resolves the cruciform DNA. This chain is Holliday junction branch migration complex subunit RuvA, found in Psychrobacter arcticus (strain DSM 17307 / VKM B-2377 / 273-4).